The following is a 356-amino-acid chain: Protein-glutamate methylesterase/protein-glutamine glutaminase 3 (356 aa).

Positions 3-120 (KVAIVDDSAV…KGFLEESQAR (118 aa)) constitute a Response regulatory domain. Aspartate 54 is subject to 4-aspartylphosphate. Residues 165–356 (NQTTDRVVAL…AEEIIAFTKQ (192 aa)) enclose the CheB-type methylesterase domain. Residues serine 177, histidine 203, and aspartate 299 contribute to the active site.

This sequence belongs to the CheB family. Post-translationally, phosphorylated by CheA. Phosphorylation of the N-terminal regulatory domain activates the methylesterase activity.

The protein resides in the cytoplasm. It catalyses the reaction [protein]-L-glutamate 5-O-methyl ester + H2O = L-glutamyl-[protein] + methanol + H(+). The enzyme catalyses L-glutaminyl-[protein] + H2O = L-glutamyl-[protein] + NH4(+). Its function is as follows. Involved in chemotaxis. Part of a chemotaxis signal transduction system that modulates chemotaxis in response to various stimuli. Catalyzes the demethylation of specific methylglutamate residues introduced into the chemoreceptors (methyl-accepting chemotaxis proteins or MCP) by CheR. Also mediates the irreversible deamidation of specific glutamine residues to glutamic acid. The chain is Protein-glutamate methylesterase/protein-glutamine glutaminase 3 from Shewanella oneidensis (strain ATCC 700550 / JCM 31522 / CIP 106686 / LMG 19005 / NCIMB 14063 / MR-1).